We begin with the raw amino-acid sequence, 179 residues long: MSRIGKKPIAVPKGVTFNVQGDVVTVKGPKGTVSNHLPGGVKLALEDGNIVVTRDDESKRAIHGLVRALVNNAVEGVTKGWTRNLEIVGIGYRAELKGKGTVVFTLGYSHPIEYPLPTGIEAAVDAKQTALTITGIDRQKVGQVAAEMRALRPPDPYKNKGVRYAGEKLKKKVGKTGAK.

This sequence belongs to the universal ribosomal protein uL6 family. In terms of assembly, part of the 50S ribosomal subunit.

Its function is as follows. This protein binds to the 23S rRNA, and is important in its secondary structure. It is located near the subunit interface in the base of the L7/L12 stalk, and near the tRNA binding site of the peptidyltransferase center. The chain is Large ribosomal subunit protein uL6 from Koribacter versatilis (strain Ellin345).